Here is a 360-residue protein sequence, read N- to C-terminus: Peptide chain release factor 1 (360 aa).

An N5-methylglutamine modification is found at Q235. Residues 291–308 are compositionally biased toward basic and acidic residues; it reads ASERRNLLGTGDRSDRNR. Residues 291-312 are disordered; that stretch reads ASERRNLLGTGDRSDRNRTYNF.

It belongs to the prokaryotic/mitochondrial release factor family. Methylated by PrmC. Methylation increases the termination efficiency of RF1.

The protein localises to the cytoplasm. In terms of biological role, peptide chain release factor 1 directs the termination of translation in response to the peptide chain termination codons UAG and UAA. This Yersinia pseudotuberculosis serotype O:1b (strain IP 31758) protein is Peptide chain release factor 1.